The following is a 666-amino-acid chain: Spartin (666 aa).

N-acetylmethionine is present on Met1. The region spanning 16 to 94 (IREAYKKAFL…LQNVRTRLEI (79 aa)) is the MIT domain. Residues 124-156 (EKLPEPQSFSSAPQHAEVNGNTSTPSAGAVAAP) are disordered. Positions 146 to 156 (STPSAGAVAAP) are enriched in low complexity. Residues 190-380 (DSGEFSSVGE…QLDQGNKDVR (191 aa)) form a ubiquitin-binding region (UBR) domain region. The LC3-interacting region (LIR); mediates interaction with MAP1LC3A AND MAP1LC3C motif lies at 193-200 (EFSSVGEE). The interval 344 to 398 (EENEFQIPGRTRPSSDQLKEASGTDVKQLDQGNKDVRHKGKRGKRAKDTSSEEVN) is disordered. Residue Lys362 forms a Glycyl lysine isopeptide (Lys-Gly) (interchain with G-Cter in ubiquitin) linkage. Over residues 379-388 (VRHKGKRGKR) the composition is skewed to basic residues. Residues 427 to 611 (ILSGASWVSW…YNINNIGIKA (185 aa)) form the Senescence domain. Residues 431 to 503 (ASWVSWGLVK…LVDGVCTVAN (73 aa)) form a required for localization to lipid droplets region. Ser470 carries the post-translational modification Phosphoserine. Residues 636–666 (RENQEGAANVNVRGEKDEQTKEVKEAKKKDK) form a disordered region. The span at 648-666 (RGEKDEQTKEVKEAKKKDK) shows a compositional bias: basic and acidic residues.

As to quaternary structure, interacts with ITCH and WWP1. Interacts (via MIT domain) with IST1; leading to the recruitment of SPART to midbodies. Interacts with MAP1LC3A and MAP1LC3C. Post-translationally, ubiquitinated; ubiquitination does not require ITCH and WWP1. Ubiquitously expressed, with highest levels of expression detected in adipose tissue.

It localises to the cytoplasm. Its subcellular location is the midbody. It is found in the lipid droplet. Its function is as follows. Lipophagy receptor that plays an important role in lipid droplet (LD) turnover in motor neurons. Localizes to LDs and interacts with components of the autophagy machinery, such as MAP1LC3A/C proteins to deliver LDs to autophagosomes for degradation via lipophagy. Lipid transfer protein required for lipid droplet degradation, including by lipophagy. Can bind and transfer all lipid species found in lipid droplets, from phospholipids to triglycerides and sterol esters but the direction of lipid transfer by spartin and its cargos are unknown. May be implicated in endosomal trafficking, or microtubule dynamics, or both. Participates in cytokinesis. This Homo sapiens (Human) protein is Spartin.